A 295-amino-acid chain; its full sequence is Glutamyl-Q tRNA(Asp) synthetase (295 aa).

L-glutamate contacts are provided by residues 6 to 10 (RFAPS) and E42. Residues 9-19 (PSPTGAMHLGN) carry the 'HIGH' region motif. Positions 93, 95, 118, and 122 each coordinate Zn(2+). L-glutamate is bound by residues Y177 and R195. The 'KMSKS' region motif lies at 233-237 (RLAKR). Position 236 (K236) interacts with ATP.

This sequence belongs to the class-I aminoacyl-tRNA synthetase family. GluQ subfamily. Zn(2+) serves as cofactor.

Catalyzes the tRNA-independent activation of glutamate in presence of ATP and the subsequent transfer of glutamate onto a tRNA(Asp). Glutamate is transferred on the 2-amino-5-(4,5-dihydroxy-2-cyclopenten-1-yl) moiety of the queuosine in the wobble position of the QUC anticodon. In Deinococcus radiodurans (strain ATCC 13939 / DSM 20539 / JCM 16871 / CCUG 27074 / LMG 4051 / NBRC 15346 / NCIMB 9279 / VKM B-1422 / R1), this protein is Glutamyl-Q tRNA(Asp) synthetase.